Reading from the N-terminus, the 180-residue chain is Ribulose bisphosphate carboxylase small subunit, chloroplastic (180 aa).

The N-terminal 56 residues, 1–56 (MASSVLSSAAVATRSNVAQANMVAPFTGLKSAASFPVSRKQNLDITSIASNGGRVQ), are a transit peptide targeting the chloroplast.

It belongs to the RuBisCO small chain family. As to quaternary structure, heterohexadecamer of 8 large and 8 small subunits.

It is found in the plastid. The protein resides in the chloroplast. RuBisCO catalyzes two reactions: the carboxylation of D-ribulose 1,5-bisphosphate, the primary event in carbon dioxide fixation, as well as the oxidative fragmentation of the pentose substrate. Both reactions occur simultaneously and in competition at the same active site. Although the small subunit is not catalytic it is essential for maximal activity. The polypeptide is Ribulose bisphosphate carboxylase small subunit, chloroplastic (Nicotiana plumbaginifolia (Leadwort-leaved tobacco)).